Here is a 931-residue protein sequence, read N- to C-terminus: Protocadherin gamma-B2 (931 aa).

Positions Met1–Pro30 are cleaved as a signal peptide. Cadherin domains follow at residues Val31–Phe133, Lys134–Phe242, Ser243–Val347, Ile348–Phe452, Gln453–Val562, and Asp570–Leu675. Residues Val31–Tyr691 are Extracellular-facing. Residues Asn419 and Asn545 are each glycosylated (N-linked (GlcNAc...) asparagine). The helical transmembrane segment at Leu692–Ser712 threads the bilayer. Over Leu713–Lys931 the chain is Cytoplasmic. Disordered regions lie at residues Asp814–Asn840 and Ala901–Lys931. Residues Trp815 to Asn840 are compositionally biased toward polar residues. Over residues Asn921–Lys931 the composition is skewed to basic residues.

It is found in the cell membrane. In terms of biological role, potential calcium-dependent cell-adhesion protein. May be involved in the establishment and maintenance of specific neuronal connections in the brain. This Pan troglodytes (Chimpanzee) protein is Protocadherin gamma-B2 (PCDHGB2).